We begin with the raw amino-acid sequence, 362 residues long: uncharacterized protein (362 aa).

7 helical membrane passes run glycine 32–valine 52, phenylalanine 75–valine 95, valine 106–valine 126, alanine 148–alanine 168, glycine 176–valine 196, valine 287–methionine 307, and valine 329–phenylalanine 349.

The protein belongs to the peptidase S58 family.

Its subcellular location is the cell membrane. Functionally, aminopeptidase. This is an uncharacterized protein from Mycobacterium leprae (strain TN).